Here is a 493-residue protein sequence, read N- to C-terminus: ATP-dependent RNA helicase dbp3 (493 aa).

Residues 1-38 (MTKRDYQNDTTAESRPTKKSKGEKKVKETKEKKEKKVK) are disordered. Residues 23 to 34 (EKKVKETKEKKE) are compositionally biased toward basic and acidic residues. Positions 97–105 (SFKSPTSIQ) match the Q motif motif. The 177-residue stretch at 109–285 (WPLLFGGRDV…STFMSSPVTV (177 aa)) folds into the Helicase ATP-binding domain. Residue 122–129 (AETGSGKT) coordinates ATP. The DEAD box motif lies at 232-235 (DEAD). One can recognise a Helicase C-terminal domain in the interval 316-462 (RLVQLLKQHQ…EVPEELLKFG (147 aa)).

The protein belongs to the DEAD box helicase family. DDX5/DBP2 subfamily.

The protein localises to the nucleus. Its subcellular location is the nucleolus. The enzyme catalyses ATP + H2O = ADP + phosphate + H(+). Functionally, ATP-dependent RNA helicase required for 60S ribosomal subunit synthesis. Involved in efficient pre-rRNA processing, predominantly at site A3, which is necessary for the normal formation of 25S and 5.8S rRNAs. This chain is ATP-dependent RNA helicase dbp3 (dbp3), found in Aspergillus terreus (strain NIH 2624 / FGSC A1156).